We begin with the raw amino-acid sequence, 581 residues long: Pyridine nucleotide-disulfide oxidoreductase domain-containing protein 2 (581 aa).

38–71 contacts FAD; it reads VVIGAGHNGLVVAAYLQRLGVNTAVFERRHVIGG.

The protein belongs to the carotenoid/retinoid oxidoreductase family. As to quaternary structure, interacts with COX5B; this interaction may contribute to localize PYROXD2 to the inner face of the inner mitochondrial membrane.

Its subcellular location is the mitochondrion matrix. Functionally, probable oxidoreductase that may play a role as regulator of mitochondrial function. This Pongo abelii (Sumatran orangutan) protein is Pyridine nucleotide-disulfide oxidoreductase domain-containing protein 2.